Reading from the N-terminus, the 317-residue chain is Ubiquinone biosynthesis protein COQ9-A, mitochondrial (317 aa).

The N-terminal 46 residues, 1–46 (MAASVTRVLKGAGGRQLLLMVARRRPVLMQPFLLMPRKFWVSSALR), are a transit peptide targeting the mitochondrion. Residues 50-97 (QRQPPFSASSTHAETQGHAEEQYQQKQPPPRYTDQAGEESEGYESEEQ) form a disordered region. Residues 53-63 (PPFSASSTHAE) show a composition bias toward polar residues. Residues 85-96 (AGEESEGYESEE) are compositionally biased toward acidic residues. R243 contacts a 1,2-diacylglycero-3-phosphoethanolamine.

It belongs to the COQ9 family. Homodimer. Heterodimer; two heterodimers of COQ7:COQ9 come together on the same side of the lipid pseudo-bilayer and form a curved tetramer with a hydrophobic surface suitable for membrane interaction. These two tetramers assemble into a soluble octamer with a pseudo-bilayer of lipids captured within. Interacts with COQ7; this interaction allows ubiquinone (CoQ) isoprene intermediates presentation to COQ7 and facilitates the COQ7-mediated hydroxylase step.

It localises to the mitochondrion. The protein operates within cofactor biosynthesis; ubiquinone biosynthesis. In terms of biological role, membrane-associated protein that warps the membrane surface to access and bind aromatic isoprenes with high specificity, including ubiquinone (CoQ) isoprene intermediates and presents them directly to COQ7, therefore facilitating the COQ7-mediated hydroxylase step. Participates in the biosynthesis of coenzyme Q, also named ubiquinone, an essential lipid-soluble electron transporter for aerobic cellular respiration. This is Ubiquinone biosynthesis protein COQ9-A, mitochondrial (coq9-a) from Xenopus laevis (African clawed frog).